The sequence spans 651 residues: Acetyl-coenzyme A synthetase (651 aa).

CoA is bound by residues 191–194 (RGGK), T311, and N335. ATP-binding positions include 387-389 (GEP), 411-416 (DTWWQT), D500, and R515. S523 provides a ligand contact to CoA. R526 is an ATP binding site. Residues V537, H539, and V542 each contribute to the Mg(2+) site. R584 contacts CoA. Position 609 is an N6-acetyllysine (K609).

Belongs to the ATP-dependent AMP-binding enzyme family. It depends on Mg(2+) as a cofactor. In terms of processing, acetylated. Deacetylation by the SIR2-homolog deacetylase activates the enzyme.

The enzyme catalyses acetate + ATP + CoA = acetyl-CoA + AMP + diphosphate. Its function is as follows. Catalyzes the conversion of acetate into acetyl-CoA (AcCoA), an essential intermediate at the junction of anabolic and catabolic pathways. AcsA undergoes a two-step reaction. In the first half reaction, AcsA combines acetate with ATP to form acetyl-adenylate (AcAMP) intermediate. In the second half reaction, it can then transfer the acetyl group from AcAMP to the sulfhydryl group of CoA, forming the product AcCoA. In Pseudomonas savastanoi pv. phaseolicola (strain 1448A / Race 6) (Pseudomonas syringae pv. phaseolicola (strain 1448A / Race 6)), this protein is Acetyl-coenzyme A synthetase.